A 101-amino-acid chain; its full sequence is Small ribosomal subunit protein uS10 (101 aa).

This sequence belongs to the universal ribosomal protein uS10 family. As to quaternary structure, part of the 30S ribosomal subunit.

Its function is as follows. Involved in the binding of tRNA to the ribosomes. This chain is Small ribosomal subunit protein uS10, found in Corynebacterium urealyticum (strain ATCC 43042 / DSM 7109).